Reading from the N-terminus, the 214-residue chain is Adenylate kinase (214 aa).

10–15 (GAGKGT) lines the ATP pocket. The tract at residues 30-59 (STGDMLRAAIKAGTELGLNAKAVMDAGQLV) is NMP. Residues Thr31, Arg36, 57–59 (QLV), 85–88 (GFPR), and Gln92 contribute to the AMP site. An LID region spans residues 122–159 (GRRVHSGSGRTYHVVFNPPKVEGKDDVTGEDLVIRADD). Residues Arg123 and 132 to 133 (TY) each bind ATP. The AMP site is built by Arg156 and Arg167. Gln200 is an ATP binding site.

Belongs to the adenylate kinase family. As to quaternary structure, monomer.

It is found in the cytoplasm. It carries out the reaction AMP + ATP = 2 ADP. It participates in purine metabolism; AMP biosynthesis via salvage pathway; AMP from ADP: step 1/1. In terms of biological role, catalyzes the reversible transfer of the terminal phosphate group between ATP and AMP. Plays an important role in cellular energy homeostasis and in adenine nucleotide metabolism. The sequence is that of Adenylate kinase from Aeromonas salmonicida (strain A449).